The sequence spans 263 residues: 3'-5' ssDNA/RNA exonuclease TatD (263 aa).

Residues E91, H127, and H152 each coordinate a divalent metal cation.

Belongs to the metallo-dependent hydrolases superfamily. TatD-type hydrolase family. TatD subfamily. Monomer. Mg(2+) serves as cofactor.

Its subcellular location is the cytoplasm. In terms of biological role, 3'-5' exonuclease that prefers single-stranded DNA and RNA. May play a role in the H(2)O(2)-induced DNA damage repair. The protein is 3'-5' ssDNA/RNA exonuclease TatD of Cronobacter turicensis (strain DSM 18703 / CCUG 55852 / LMG 23827 / z3032).